The chain runs to 24 residues: Lactadherin (24 aa).

It localises to the membrane. The protein localises to the secreted. The protein resides in the cytoplasmic vesicle. It is found in the secretory vesicle. Its subcellular location is the acrosome membrane. In terms of biological role, specific ligand for the alpha-v/beta-3 and alpha-v/beta-5 receptors. Also binds to phosphatidylserine-enriched cell surfaces in a receptor-independent manner. Zona pellucida-binding protein which may play a role in gamete interaction. Contributes to phagocytic removal of apoptotic cells in many tissues. Plays an important role in the maintenance of intestinal epithelial homeostasis and the promotion of mucosal healing. Promotes VEGF-dependent neovascularization. The protein is Lactadherin of Equus asinus (Donkey).